A 694-amino-acid chain; its full sequence is Elongation factor G (694 aa).

The tr-type G domain occupies 8–287 (EDYRNFGIMA…AVISYLPSPV (280 aa)). GTP contacts are provided by residues 17–24 (AHIDAGKT), 86–90 (DTPGH), and 140–143 (NKMD).

It belongs to the TRAFAC class translation factor GTPase superfamily. Classic translation factor GTPase family. EF-G/EF-2 subfamily.

It localises to the cytoplasm. In terms of biological role, catalyzes the GTP-dependent ribosomal translocation step during translation elongation. During this step, the ribosome changes from the pre-translocational (PRE) to the post-translocational (POST) state as the newly formed A-site-bound peptidyl-tRNA and P-site-bound deacylated tRNA move to the P and E sites, respectively. Catalyzes the coordinated movement of the two tRNA molecules, the mRNA and conformational changes in the ribosome. The polypeptide is Elongation factor G (Bartonella quintana (strain Toulouse) (Rochalimaea quintana)).